The sequence spans 365 residues: Eukaryotic translation initiation factor 3 subunit H (365 aa).

An MPN domain is found at 15–166 (ILLDSLVVMK…LRAWRLSTAA (152 aa)).

This sequence belongs to the eIF-3 subunit H family. In terms of assembly, component of the eukaryotic translation initiation factor 3 (eIF-3) complex.

The protein resides in the cytoplasm. Its function is as follows. Component of the eukaryotic translation initiation factor 3 (eIF-3) complex, which is involved in protein synthesis of a specialized repertoire of mRNAs and, together with other initiation factors, stimulates binding of mRNA and methionyl-tRNAi to the 40S ribosome. The eIF-3 complex specifically targets and initiates translation of a subset of mRNAs involved in cell proliferation. The protein is Eukaryotic translation initiation factor 3 subunit H of Caenorhabditis elegans.